The chain runs to 472 residues: 12S seed storage protein CRA1 (472 aa).

Residues 1-24 form the signal peptide; it reads MARVSSLLSFCLTLLILFHGYAAQ. Disulfide bonds link Cys36–Cys69 and Cys112–Cys289. Residues 41 to 236 enclose the Cupin type-1 1 domain; the sequence is LNALEPSHVL…ALKIDLQTAQ (196 aa). Thr115 bears the Phosphothreonine mark. Residues 259–283 are disordered; the sequence is RPPLRGQRPQEEEEEEGRHGRHGNG. The Cupin type-1 2 domain maps to 295 to 444; sequence DNLDDPSRAD…GFQISPEEAR (150 aa). Tyr312 bears the Phosphotyrosine mark. A Phosphoserine modification is found at Ser314. Residues Thr408 and Thr433 each carry the phosphothreonine modification.

Belongs to the 11S seed storage protein (globulins) family. Hexamer; each subunit is composed of an acidic and a basic chain derived from a single precursor and linked by a disulfide bond. Post-translationally, phosphorylated in seeds on some Tyr residues in response to abscisic acid (ABA). Proteolytically processed during seed maturation at a conserved Asn-Gly peptide bond by an asparaginyl endopeptidase to produce two mature polypeptides referred to as alpha and beta subunits that are joined together by a disulfide bond. Accumulates in seeds 8 days after anthesis.

It is found in the protein storage vacuole. Its function is as follows. Seed storage protein. In Arabidopsis thaliana (Mouse-ear cress), this protein is 12S seed storage protein CRA1 (CRA1).